The chain runs to 278 residues: Large ribosomal subunit protein uL2 (278 aa).

The disordered stretch occupies residues 201 to 278 (HGNINDGKAG…IMRSRHQRKK (78 aa)). A compositionally biased stretch (basic residues) spans 210–221 (GRSRWRGKRPHV).

It belongs to the universal ribosomal protein uL2 family. Part of the 50S ribosomal subunit. Forms a bridge to the 30S subunit in the 70S ribosome.

In terms of biological role, one of the primary rRNA binding proteins. Required for association of the 30S and 50S subunits to form the 70S ribosome, for tRNA binding and peptide bond formation. It has been suggested to have peptidyltransferase activity; this is somewhat controversial. Makes several contacts with the 16S rRNA in the 70S ribosome. In Rhizobium meliloti (strain 1021) (Ensifer meliloti), this protein is Large ribosomal subunit protein uL2.